Here is a 155-residue protein sequence, read N- to C-terminus: 2-C-methyl-D-erythritol 2,4-cyclodiphosphate synthase (155 aa).

2 residues coordinate a divalent metal cation: Asp-8 and His-10. Residues 8 to 10 and 34 to 35 each bind 4-CDP-2-C-methyl-D-erythritol 2-phosphate; these read DVH and HS. His-42 is an a divalent metal cation binding site. Residues 56–58, 61–65, 100–106, 132–135, Phe-139, and Lys-142 contribute to the 4-CDP-2-C-methyl-D-erythritol 2-phosphate site; these read DIG, FPDSD, AQKPKML, and TTEE.

Belongs to the IspF family. Homotrimer. Requires a divalent metal cation as cofactor.

It carries out the reaction 4-CDP-2-C-methyl-D-erythritol 2-phosphate = 2-C-methyl-D-erythritol 2,4-cyclic diphosphate + CMP. It functions in the pathway isoprenoid biosynthesis; isopentenyl diphosphate biosynthesis via DXP pathway; isopentenyl diphosphate from 1-deoxy-D-xylulose 5-phosphate: step 4/6. Functionally, involved in the biosynthesis of isopentenyl diphosphate (IPP) and dimethylallyl diphosphate (DMAPP), two major building blocks of isoprenoid compounds. Catalyzes the conversion of 4-diphosphocytidyl-2-C-methyl-D-erythritol 2-phosphate (CDP-ME2P) to 2-C-methyl-D-erythritol 2,4-cyclodiphosphate (ME-CPP) with a corresponding release of cytidine 5-monophosphate (CMP). The polypeptide is 2-C-methyl-D-erythritol 2,4-cyclodiphosphate synthase (Clostridium botulinum (strain Okra / Type B1)).